A 121-amino-acid chain; its full sequence is Large ribosomal subunit protein bL20 (121 aa).

Belongs to the bacterial ribosomal protein bL20 family.

Functionally, binds directly to 23S ribosomal RNA and is necessary for the in vitro assembly process of the 50S ribosomal subunit. It is not involved in the protein synthesizing functions of that subunit. The chain is Large ribosomal subunit protein bL20 from Orientia tsutsugamushi (strain Ikeda) (Rickettsia tsutsugamushi).